The sequence spans 622 residues: Chaperone protein HscA homolog (622 aa).

It belongs to the heat shock protein 70 family.

In terms of biological role, chaperone involved in the maturation of iron-sulfur cluster-containing proteins. Has a low intrinsic ATPase activity which is markedly stimulated by HscB. The chain is Chaperone protein HscA homolog from Acidovorax ebreus (strain TPSY) (Diaphorobacter sp. (strain TPSY)).